The following is a 193-amino-acid chain: MKVKNTIAATSFAAAGLAALAVAVSPPAAAGDLVGPGCAEYAAANPTGPASVQGMSQDPVAVAASNNPELTTLTAALSGQLNPQVNLVDTLNSGQYTVFAPTNAAFSKLPASTIDELKTNSSLLTSILTYHVVAGQTSPANVVGTRQTLQGASVTVTGQGNSLKVGNADVVCGGVSTANATVYMIDSVLMPPA.

Positions 1–30 (MKVKNTIAATSFAAAGLAALAVAVSPPAAA) are cleaved as a signal peptide. The 133-residue stretch at 57-189 (QDPVAVAASN…ATVYMIDSVL (133 aa)) folds into the FAS1 domain.

In terms of assembly, generally found as a monomer; homodimer in culture fluids.

The protein localises to the secreted. This is Immunogenic protein MPB70 (mpb70) from Mycobacterium bovis (strain ATCC BAA-935 / AF2122/97).